We begin with the raw amino-acid sequence, 137 residues long: Nucleoside diphosphate kinase (137 aa).

6 residues coordinate ATP: lysine 10, phenylalanine 59, arginine 87, threonine 93, arginine 104, and asparagine 114. Histidine 117 serves as the catalytic Pros-phosphohistidine intermediate.

The protein belongs to the NDK family. As to quaternary structure, homotetramer. The cofactor is Mg(2+).

The protein resides in the cytoplasm. It catalyses the reaction a 2'-deoxyribonucleoside 5'-diphosphate + ATP = a 2'-deoxyribonucleoside 5'-triphosphate + ADP. The enzyme catalyses a ribonucleoside 5'-diphosphate + ATP = a ribonucleoside 5'-triphosphate + ADP. Major role in the synthesis of nucleoside triphosphates other than ATP. The ATP gamma phosphate is transferred to the NDP beta phosphate via a ping-pong mechanism, using a phosphorylated active-site intermediate. This is Nucleoside diphosphate kinase from Streptomyces coelicolor (strain ATCC BAA-471 / A3(2) / M145).